The chain runs to 322 residues: 4-diphosphocytidyl-2-C-methyl-D-erythritol kinase (322 aa).

The active site involves Lys25. 110 to 120 provides a ligand contact to ATP; it reads PVAGGMAGGSA. Asp152 is an active-site residue.

Belongs to the GHMP kinase family. IspE subfamily.

It catalyses the reaction 4-CDP-2-C-methyl-D-erythritol + ATP = 4-CDP-2-C-methyl-D-erythritol 2-phosphate + ADP + H(+). It participates in isoprenoid biosynthesis; isopentenyl diphosphate biosynthesis via DXP pathway; isopentenyl diphosphate from 1-deoxy-D-xylulose 5-phosphate: step 3/6. Catalyzes the phosphorylation of the position 2 hydroxy group of 4-diphosphocytidyl-2C-methyl-D-erythritol. This Mycolicibacterium vanbaalenii (strain DSM 7251 / JCM 13017 / BCRC 16820 / KCTC 9966 / NRRL B-24157 / PYR-1) (Mycobacterium vanbaalenii) protein is 4-diphosphocytidyl-2-C-methyl-D-erythritol kinase.